The primary structure comprises 640 residues: Fructose-1,6-bisphosphatase class 3 (640 aa).

This sequence belongs to the FBPase class 3 family. It depends on Mn(2+) as a cofactor.

It carries out the reaction beta-D-fructose 1,6-bisphosphate + H2O = beta-D-fructose 6-phosphate + phosphate. The protein operates within carbohydrate biosynthesis; gluconeogenesis. The sequence is that of Fructose-1,6-bisphosphatase class 3 from Lactococcus lactis subsp. lactis (strain IL1403) (Streptococcus lactis).